The chain runs to 509 residues: METELSETILPTVTKMYVCGPTVYNDAHIGHARIYVIVDLINRTMNKILNKPTHLVMNVTDIDDKIIRESKNKGITWLELARLHENSFFDCMSKLNVTRPDSVIRVTESISDIVLYIQQIINNGFAYIVSDSSVYFDSIEYKKAGYEFSEIDDEEEQQYESLLSKEIVSQKKHHKDFALWKGRSESDVGFNVEFIFDNQTFKSFGVPGWHIECSAMIKKTLGNSIDIHFGGIDLKFPHHYNECLQANAYHHPMYNPLHQSDTMIFHTWTREFIHVGHLCIKGQKMSKSLKNFSTIKEMLDKINSNQFRWLFMSTKWKQQVDFTDGLISIAKELDFTVVNFVNRVSNYPFEVSDVEFNDKETLLHDDFYRIQQRIYSYLTEFKFEMVARSIQHLIGTTNVYLDLPRPNESIVGKIRDYLLDLLDKLGFIYRVGNSSSSHKIKDLMNILIETRSQLRQLTRNPDLSPGIKKQLFDILDRQRNIQLPDIGIILEDSKDSSLWYENSCVQSSE.

C19 provides a ligand contact to Zn(2+). The 'HIGH' region signature appears at 21–31; it reads PTVYNDAHIGH. The Zn(2+) site is built by C213, H238, and E242. The 'KMSKS' region motif lies at 284 to 288; sequence KMSKS. ATP is bound at residue K287.

It belongs to the class-I aminoacyl-tRNA synthetase family. Zn(2+) serves as cofactor.

It carries out the reaction tRNA(Cys) + L-cysteine + ATP = L-cysteinyl-tRNA(Cys) + AMP + diphosphate. The polypeptide is Cysteine--tRNA ligase (CARS) (Acanthamoeba polyphaga (Amoeba)).